A 496-amino-acid polypeptide reads, in one-letter code: uncharacterized protein (496 aa).

A signal peptide spans 1-19 (MTTGYILIAAILILGGVIA). The chain crosses the membrane as a helical span at residues 45 to 67 (AVLVTILTGGLVSATTLAILFIA). The interval 113-137 (LETTRTDKKQVETQRDQAKKEKLKA) is disordered.

It is found in the membrane. This is an uncharacterized protein from Nostoc sp. (strain PCC 7120 / SAG 25.82 / UTEX 2576).